Reading from the N-terminus, the 1571-residue chain is Paternally-expressed gene 3 protein (1571 aa).

Disordered regions lie at residues 1-120 (MYHH…NPIQ) and 137-241 (AEDD…QERG). 5 stretches are compositionally biased toward basic and acidic residues: residues 35-56 (GSER…DRWP), 80-99 (FGLD…RSQD), 169-186 (PEAK…DESS), 193-215 (KFIK…ERPP), and 223-241 (DNWK…QERG). Residues 199 to 265 (ARNPKSGRAR…DLASRSRALE (67 aa)) form a 10 X 5 AA repeat of P-H-X-X-E region. Residues 199–265 (ARNPKSGRAR…DLASRSRALE (67 aa)) form a 3 X 5 AA repeat of P-H-D-D-K region. 4 C2H2-type zinc fingers span residues 325 to 347 (YVCD…QIMH), 378 to 400 (FECK…RQIH), 436 to 458 (YECK…QKIH), and 520 to 542 (YECK…QKIH). The disordered stretch occupies residues 456–495 (KIHGRGNSDDRDNERERERDRLRARAREQRERERERERER). Disordered regions lie at residues 585–649 (ALMG…LKFP), 672–713 (EAQK…TYEG), and 764–820 (REDA…AKKK). Basic and acidic residues predominate over residues 592-614 (SSEHQKNRSRRNFFEGRGFEKPF). 2 stretches are compositionally biased toward polar residues: residues 770–781 (GSSSSNYHTPNV) and 799–808 (DVTFSVPSSS). The segment covering 809–820 (VREHQKARAKKK) has biased composition (basic and acidic residues). A C2H2-type 5 zinc finger spans residues 850-872 (FECQECGEAFARRSELIEHQKIH). The disordered stretch occupies residues 937–1070 (FNAEEPHDKE…ESHGQEKVED (134 aa)). Residues 940–1070 (EEPHDKETHG…ESHGQEKVED (131 aa)) are compositionally biased toward basic and acidic residues. A run of 13 repeats spans residues 942–946 (PHDKE), 967–971 (PHGDE), 987–991 (PHDDK), 992–996 (PHGQE), 997–1001 (PHDDK), 1002–1006 (PHGQE), 1007–1011 (PHDDK), 1012–1016 (PHGQE), 1017–1021 (PHGDE), 1022–1026 (PHGQE), 1027–1031 (PHGDE), 1032–1036 (PHDKE), and 1047–1051 (PHSEE). C2H2-type zinc fingers lie at residues 1091 to 1113 (YECQ…QDTH), 1147 to 1169 (YECP…QRVH), 1209 to 1231 (IRCR…MRQH), and 1266 to 1289 (FECT…TKVH). The C2H2-type 10; degenerate zinc finger occupies 1317–1339 (YECKDCGQSFLDDTVIAERMVFH). The segment at 1373-1487 (NAEAAEPEVE…DQEIEVEEPY (115 aa)) is disordered. 3 stretches are compositionally biased toward acidic residues: residues 1377–1397 (AEPE…EVEA), 1405–1418 (EGPD…DGEA), and 1431–1485 (DADE…EVEE). 2 consecutive C2H2-type zinc fingers follow at residues 1488 to 1510 (YNCH…LKSH) and 1547 to 1569 (FKCD…QNSH).

Belongs to the krueppel C2H2-type zinc-finger protein family. Homodimer. Interacts with SIAH1A and SIAH2. Interacts with TRAF2. In terms of tissue distribution, brain, glial cells, neurons, skeletal muscle, uterus and placenta. In the placenta it is found in all trophoblast cells.

The protein localises to the nucleus. The protein resides in the cytoplasm. In terms of biological role, induces apoptosis in cooperation with SIAH1A. Acts as a mediator between p53/TP53 and BAX in a neuronal death pathway that is activated by DNA damage. Acts synergistically with TRAF2 and inhibits TNF induced apoptosis through activation of NF-kappa-B. Plays a role in regulating maternal behavior and offspring growth. The protein is Paternally-expressed gene 3 protein (Peg3) of Mus musculus (Mouse).